The sequence spans 442 residues: tRNA-2-methylthio-N(6)-dimethylallyladenosine synthase (442 aa).

The MTTase N-terminal domain occupies 2–120; that stretch reads KKVFIRTFGC…LPKMIVDKET (119 aa). [4Fe-4S] cluster-binding residues include cysteine 11, cysteine 49, cysteine 83, cysteine 157, cysteine 161, and cysteine 164. Positions 143 to 375 constitute a Radical SAM core domain; it reads RVEGGAAFVS…NEVIEAETAR (233 aa). The region spanning 378–441 is the TRAM domain; sequence QTMIGTVQRC…TFSLRGKVVE (64 aa).

This sequence belongs to the methylthiotransferase family. MiaB subfamily. In terms of assembly, monomer. [4Fe-4S] cluster serves as cofactor.

It is found in the cytoplasm. It carries out the reaction N(6)-dimethylallyladenosine(37) in tRNA + (sulfur carrier)-SH + AH2 + 2 S-adenosyl-L-methionine = 2-methylsulfanyl-N(6)-dimethylallyladenosine(37) in tRNA + (sulfur carrier)-H + 5'-deoxyadenosine + L-methionine + A + S-adenosyl-L-homocysteine + 2 H(+). Functionally, catalyzes the methylthiolation of N6-(dimethylallyl)adenosine (i(6)A), leading to the formation of 2-methylthio-N6-(dimethylallyl)adenosine (ms(2)i(6)A) at position 37 in tRNAs that read codons beginning with uridine. This is tRNA-2-methylthio-N(6)-dimethylallyladenosine synthase from Neisseria meningitidis serogroup C / serotype 2a (strain ATCC 700532 / DSM 15464 / FAM18).